Consider the following 446-residue polypeptide: Phosphoglucosamine mutase (446 aa).

Ser-100 functions as the Phosphoserine intermediate in the catalytic mechanism. Ser-100, Asp-239, Asp-241, and Asp-243 together coordinate Mg(2+). Phosphoserine is present on Ser-100.

It belongs to the phosphohexose mutase family. Mg(2+) is required as a cofactor. In terms of processing, activated by phosphorylation.

It carries out the reaction alpha-D-glucosamine 1-phosphate = D-glucosamine 6-phosphate. Its function is as follows. Catalyzes the conversion of glucosamine-6-phosphate to glucosamine-1-phosphate. The protein is Phosphoglucosamine mutase of Oceanobacillus iheyensis (strain DSM 14371 / CIP 107618 / JCM 11309 / KCTC 3954 / HTE831).